A 221-amino-acid polypeptide reads, in one-letter code: Pyridoxine/pyridoxamine 5'-phosphate oxidase (221 aa).

Substrate-binding positions include 14–17 (RNEY) and K73. FMN is bound by residues 68–73 (RTVLLK), 83–84 (FT), K90, and Q112. Substrate contacts are provided by Y130, R134, and S138. FMN contacts are provided by residues 147–148 (QS) and W193. Residue 199–201 (RLH) coordinates substrate. R203 is an FMN binding site.

The protein belongs to the pyridoxamine 5'-phosphate oxidase family. As to quaternary structure, homodimer. FMN serves as cofactor.

The catalysed reaction is pyridoxamine 5'-phosphate + O2 + H2O = pyridoxal 5'-phosphate + H2O2 + NH4(+). The enzyme catalyses pyridoxine 5'-phosphate + O2 = pyridoxal 5'-phosphate + H2O2. It functions in the pathway cofactor metabolism; pyridoxal 5'-phosphate salvage; pyridoxal 5'-phosphate from pyridoxamine 5'-phosphate: step 1/1. The protein operates within cofactor metabolism; pyridoxal 5'-phosphate salvage; pyridoxal 5'-phosphate from pyridoxine 5'-phosphate: step 1/1. Its function is as follows. Catalyzes the oxidation of either pyridoxine 5'-phosphate (PNP) or pyridoxamine 5'-phosphate (PMP) into pyridoxal 5'-phosphate (PLP). This is Pyridoxine/pyridoxamine 5'-phosphate oxidase from Salinispora arenicola (strain CNS-205).